Reading from the N-terminus, the 600-residue chain is NADH-quinone oxidoreductase subunit C/D (600 aa).

The segment at 1–190 (MIDLMPKKNT…EPFFLNEQKE (190 aa)) is NADH dehydrogenase I subunit C. Residues 214–600 (EFMFLNLGPN…IDFVMSDVDR (387 aa)) form an NADH dehydrogenase I subunit D region.

This sequence in the N-terminal section; belongs to the complex I 30 kDa subunit family. It in the C-terminal section; belongs to the complex I 49 kDa subunit family. In terms of assembly, NDH-1 is composed of 13 different subunits. Subunits NuoB, CD, E, F, and G constitute the peripheral sector of the complex.

The protein localises to the cell inner membrane. It catalyses the reaction a quinone + NADH + 5 H(+)(in) = a quinol + NAD(+) + 4 H(+)(out). Its function is as follows. NDH-1 shuttles electrons from NADH, via FMN and iron-sulfur (Fe-S) centers, to quinones in the respiratory chain. The immediate electron acceptor for the enzyme in this species is believed to be ubiquinone. Couples the redox reaction to proton translocation (for every two electrons transferred, four hydrogen ions are translocated across the cytoplasmic membrane), and thus conserves the redox energy in a proton gradient. This Buchnera aphidicola subsp. Acyrthosiphon pisum (strain APS) (Acyrthosiphon pisum symbiotic bacterium) protein is NADH-quinone oxidoreductase subunit C/D.